The following is a 537-amino-acid chain: Protein ST7 homolog (537 aa).

The helical transmembrane segment at phenylalanine 15–tryptophan 35 threads the bilayer. Residues serine 61–methionine 111 form a disordered region. Residues serine 67 to asparagine 84 show a composition bias toward low complexity. The span at glycine 85–glycine 99 shows a compositional bias: gly residues. Low complexity predominate over residues serine 100 to threonine 109. A helical transmembrane segment spans residues leucine 472–alanine 492.

The protein belongs to the ST7 family.

Its subcellular location is the membrane. This chain is Protein ST7 homolog, found in Drosophila melanogaster (Fruit fly).